The following is a 144-amino-acid chain: Large ribosomal subunit protein uL16 (144 aa).

Positions M1–G19 are enriched in basic residues. The tract at residues M1–E26 is disordered.

It belongs to the universal ribosomal protein uL16 family. Part of the 50S ribosomal subunit.

Functionally, binds 23S rRNA and is also seen to make contacts with the A and possibly P site tRNAs. This chain is Large ribosomal subunit protein uL16, found in Macrococcus caseolyticus (strain JCSC5402) (Macrococcoides caseolyticum).